The following is a 145-amino-acid chain: uncharacterized protein (145 aa).

Basic and acidic residues predominate over residues 1–18 (MAEQQPSKEEKKEDKKDE). Positions 1-61 (MAEQQPSKEE…CTEGEWDASD (61 aa)) are disordered.

This is an uncharacterized protein from Caenorhabditis elegans.